The primary structure comprises 329 residues: Putative 1-aminocyclopropane-1-carboxylate deaminase (329 aa).

Lys54 carries the N6-(pyridoxal phosphate)lysine modification.

Belongs to the ACC deaminase/D-cysteine desulfhydrase family. The cofactor is pyridoxal 5'-phosphate.

It carries out the reaction 1-aminocyclopropane-1-carboxylate + H2O = 2-oxobutanoate + NH4(+). In Pyrococcus furiosus (strain ATCC 43587 / DSM 3638 / JCM 8422 / Vc1), this protein is Putative 1-aminocyclopropane-1-carboxylate deaminase.